Reading from the N-terminus, the 755-residue chain is Biodegradative arginine decarboxylase (755 aa).

An N6-(pyridoxal phosphate)lysine modification is found at Lys386.

It belongs to the Orn/Lys/Arg decarboxylase class-I family. Homodecamer. The basic unit is a homodimer, organized into a ring of giving a pentamer of five homodimers. It depends on pyridoxal 5'-phosphate as a cofactor.

The protein localises to the cytoplasm. It carries out the reaction L-arginine + H(+) = agmatine + CO2. Its activity is regulated as follows. Homodimers are probably inactive, their assembly into a homodecamer at low pH requires neutralization of negatively charged residues. This uses cytoplasmic protons, contributing pH regulation and stabilizes the homodecamer. Its function is as follows. Component of the acid-resistance (AR) system allowing enteric pathogens to survive the acidic environment in the stomach. ADC can be found in two forms: biodegradative (this enzyme) and biosynthetic (speA). The biodegradative form plays a role in regulating pH by consuming proteins. Converts arginine imported by AdiC to agmatine which is then exported by AdiC. The chain is Biodegradative arginine decarboxylase (adiA) from Escherichia coli (strain K12).